The primary structure comprises 766 residues: Exocyst complex component 6 (766 aa).

Residues 28–90 (NTKQIGDQLE…SLDTSLRQIS (63 aa)) are a coiled coil.

It belongs to the SEC15 family. In terms of assembly, the exocyst complex is composed of Sec3/Exoc1, Sec5/Exoc2, Sec6/Exoc3, Sec8/Exoc4, Sec10/Exoc5, Sec15/Exoc6, Exo70/Exoc7 and Exo84/Exoc8. Interacts with RAB3, RAB8, RAB11 and RAB27. As to expression, detected in developing rhabdomeres in photoreceptor cells.

Its subcellular location is the cell projection. It is found in the rhabdomere. Component of the exocyst complex involved in the docking of exocytic vesicles with fusion sites on the plasma membrane. This chain is Exocyst complex component 6, found in Drosophila melanogaster (Fruit fly).